The primary structure comprises 58 residues: UPF0434 protein Daro_3207 (58 aa).

The protein belongs to the UPF0434 family.

In Dechloromonas aromatica (strain RCB), this protein is UPF0434 protein Daro_3207.